The primary structure comprises 127 residues: Chondrosarcoma-associated gene 2/3 protein (127 aa).

The disordered stretch occupies residues 68 to 127 (MSRKPRASSPLSNNHPPTPKRRGSGRHPLNPGPEALSKFPRQPGREKGPIKEVPGTKGSP).

As to expression, weakly expressed in kidney. Expressed in various tumor cell lines including carcinomas, myeloid and lymphoid malignancies, melanomas and prostate cancer. Overexpressed in taxol-resistant breast cancer line MDA 435TR and the doxorubicin-resistant multiple myelanoma lines RPMI-8226/Dox40 and RPMI-8226/MDR10V.

In terms of biological role, drug-resistance related protein, its expression is associated with the chemotherapy resistant and neoplastic phenotype. May also be linked to the malignant phenotype. The protein is Chondrosarcoma-associated gene 2/3 protein (CSAG2) of Homo sapiens (Human).